A 130-amino-acid polypeptide reads, in one-letter code: Small ribosomal subunit protein uS9 (130 aa).

This sequence belongs to the universal ribosomal protein uS9 family.

The polypeptide is Small ribosomal subunit protein uS9 (Burkholderia vietnamiensis (strain G4 / LMG 22486) (Burkholderia cepacia (strain R1808))).